Consider the following 299-residue polypeptide: Muscleblind-like protein (299 aa).

2 consecutive C3H1-type zinc fingers follow at residues 38–66 (WLQV…HPPP) and 72–100 (QGRV…HPPQ).

Belongs to the muscleblind family.

It is found in the nucleus. Functionally, binds to RNA with repeat sequences CUG and CCUG. The polypeptide is Muscleblind-like protein (Caenorhabditis briggsae).